An 89-amino-acid chain; its full sequence is Neurotoxin LmNaTx28 (89 aa).

Residues M1–S18 form the signal peptide. In terms of domain architecture, LCN-type CS-alpha/beta spans K20–Q85. Cystine bridges form between C33–C57, C43–C62, C47–C64, and C58–C84.

This sequence belongs to the long (4 C-C) scorpion toxin superfamily. Sodium channel inhibitor family. Beta subfamily. In terms of tissue distribution, expressed by the venom gland.

The protein localises to the secreted. Binds voltage-independently at site-4 of sodium channels (Nav) and shift the voltage of activation toward more negative potentials thereby affecting sodium channel activation and promoting spontaneous and repetitive firing. This chain is Neurotoxin LmNaTx28, found in Lychas mucronatus (Chinese swimming scorpion).